Reading from the N-terminus, the 293-residue chain is ESX-3 secretion-associated protein EspG3 (293 aa).

Belongs to the EspG family.

The protein resides in the cytoplasm. In Mycolicibacterium smegmatis (strain ATCC 700084 / mc(2)155) (Mycobacterium smegmatis), this protein is ESX-3 secretion-associated protein EspG3.